The chain runs to 460 residues: Chromosomal replication initiator protein DnaA (460 aa).

Residues 1 to 73 are domain I, interacts with DnaA modulators; sequence MEISIDSLWS…ANVVQSILGH (73 aa). The tract at residues 73 to 116 is domain II; that stretch reads HPVEIYITVAKGEEFEEIGGGGAWELPTTNSIYETPNQNRQPNT. The segment at 117 to 333 is domain III, AAA+ region; sequence ELNAKYVFSR…GALTRALAYI (217 aa). The ATP site is built by G161, G163, K164, and T165. The tract at residues 334-460 is domain IV, binds dsDNA; that stretch reads SIWGLPMTVA…MNSRSRKPSL (127 aa).

Belongs to the DnaA family. Oligomerizes as a right-handed, spiral filament on DNA at oriC.

It localises to the cytoplasm. In terms of biological role, plays an essential role in the initiation and regulation of chromosomal replication. ATP-DnaA binds to the origin of replication (oriC) to initiate formation of the DNA replication initiation complex once per cell cycle. Binds the DnaA box (a 9 base pair repeat at the origin) and separates the double-stranded (ds)DNA. Forms a right-handed helical filament on oriC DNA; dsDNA binds to the exterior of the filament while single-stranded (ss)DNA is stabiized in the filament's interior. The ATP-DnaA-oriC complex binds and stabilizes one strand of the AT-rich DNA unwinding element (DUE), permitting loading of DNA polymerase. After initiation quickly degrades to an ADP-DnaA complex that is not apt for DNA replication. Binds acidic phospholipids. This is Chromosomal replication initiator protein DnaA from Trichormus variabilis (strain ATCC 29413 / PCC 7937) (Anabaena variabilis).